The primary structure comprises 352 residues: Uricase (352 aa).

Positions 1-32 (MFATPLRQPAAANHQTPKNSAGMDEHGKPYQY) are disordered. Positions 23–32 (MDEHGKPYQY) are enriched in basic and acidic residues. Active-site charge relay system residues include Lys41 and Thr86. Urate contacts are provided by Thr86, Asp87, Phe214, Arg231, Val279, Gln280, and Asn306. The Charge relay system role is filled by His308. The Microbody targeting signal motif lies at 350–352 (SHL).

The protein belongs to the uricase family. Malpighian tubules.

It localises to the peroxisome. It carries out the reaction urate + O2 + H2O = 5-hydroxyisourate + H2O2. It functions in the pathway purine metabolism; urate degradation; (S)-allantoin from urate: step 1/3. With respect to regulation, repressed by 20-hydroxyecdysone. Functionally, catalyzes the oxidation of uric acid to 5-hydroxyisourate, which is further processed to form (S)-allantoin. This Drosophila melanogaster (Fruit fly) protein is Uricase (Uro).